The following is a 280-amino-acid chain: 4-diphosphocytidyl-2-C-methyl-D-erythritol kinase (280 aa).

The active site involves Lys-8. Residue 91-101 (PVAAGLAGGST) participates in ATP binding. Asp-133 is a catalytic residue.

This sequence belongs to the GHMP kinase family. IspE subfamily.

It carries out the reaction 4-CDP-2-C-methyl-D-erythritol + ATP = 4-CDP-2-C-methyl-D-erythritol 2-phosphate + ADP + H(+). It functions in the pathway isoprenoid biosynthesis; isopentenyl diphosphate biosynthesis via DXP pathway; isopentenyl diphosphate from 1-deoxy-D-xylulose 5-phosphate: step 3/6. Its function is as follows. Catalyzes the phosphorylation of the position 2 hydroxy group of 4-diphosphocytidyl-2C-methyl-D-erythritol. The chain is 4-diphosphocytidyl-2-C-methyl-D-erythritol kinase from Clostridium botulinum (strain Loch Maree / Type A3).